A 105-amino-acid chain; its full sequence is Thioredoxin (105 aa).

In terms of domain architecture, Thioredoxin spans 2–105; sequence VKLIESKEAF…KLEASITEYA (104 aa). Lys3 is subject to N6-acetyllysine. Lys8 bears the N6-succinyllysine mark. Active-site nucleophile residues include Cys32 and Cys35. A disulfide bridge links Cys32 with Cys35. N6-acetyllysine is present on Lys39. Cys62 and Cys69 each carry S-nitrosocysteine. Cys73 is modified (S-nitrosocysteine; alternate). Lys94 is subject to N6-acetyllysine; alternate. Lys94 bears the N6-succinyllysine; alternate mark.

This sequence belongs to the thioredoxin family. As to quaternary structure, homodimer; disulfide-linked. Interacts with TXNIP through the redox-active site. Interacts with MAP3K5 and CASP3. Interacts with APEX1; the interaction stimulates the FOS/JUN AP-1 DNA-binding activity in a redox-dependent manner. In the fully reduced protein, both Cys-69 and Cys-73 are nitrosylated in response to nitric oxide (NO). When two disulfide bonds are present in the protein, only Cys-73 is nitrosylated. Cys-73 can serve as donor for nitrosylation of target proteins.

The protein resides in the nucleus. Its subcellular location is the cytoplasm. It localises to the secreted. Its function is as follows. Participates in various redox reactions through the reversible oxidation of its active center dithiol to a disulfide and catalyzes dithiol-disulfide exchange reactions. Plays a role in the reversible S-nitrosylation of cysteine residues in target proteins, and thereby contributes to the response to intracellular nitric oxide. Nitrosylates the active site Cys of CASP3 in response to nitric oxide (NO), and thereby inhibits caspase-3 activity. Induces the FOS/JUN AP-1 DNA binding activity in ionizing radiation (IR) cells through its oxidation/reduction status and stimulates AP-1 transcriptional activity. In terms of biological role, ADF augments the expression of the interleukin-2 receptor TAC (IL2R/P55). The sequence is that of Thioredoxin (Txn) from Mus musculus (Mouse).